A 343-amino-acid polypeptide reads, in one-letter code: MEAVKLTQLVSCAGUAAKMSPETLAQVLRYLPEINDPNALVGTNTADDAAVYRISDEQAIVLTVDYFTPVVDDPYYFGVIAAANSLSDIYAMGAKPLFALNVVGFPKKLPPEILATILKGGADKAREAGIPVLGGHTVDDAEPKYGMVVCGLVHPDKIVKNHPPHPGDSLILTKPLGIGVLTTGMKRGIVPENTAKKVMEVMETLNDKAAEVMVEVGVSAATDITGFGLLGHLKEMLQEEFGAEIYLTKIPAIEGAWEFAGMRVFPGGAKNNLNYLLPHLDFAGEFAEEEKLFLADPQTSGGLLMAVSQEKKEELVKKLQQKGVLAAEIGIITGNKGKIVVKR.

Sec-15 is a catalytic residue. A non-standard amino acid (selenocysteine) is located at residue Sec-15. ATP-binding positions include Lys-18 and 45-47 (TAD). Asp-48 lines the Mg(2+) pocket. Residues Asp-65, Asp-88, and 135–137 (GHT) contribute to the ATP site. Asp-88 provides a ligand contact to Mg(2+). Asp-223 contributes to the Mg(2+) binding site.

It belongs to the selenophosphate synthase 1 family. Class I subfamily. As to quaternary structure, homodimer. It depends on Mg(2+) as a cofactor.

The catalysed reaction is hydrogenselenide + ATP + H2O = selenophosphate + AMP + phosphate + 2 H(+). Functionally, synthesizes selenophosphate from selenide and ATP. The polypeptide is Selenide, water dikinase (Carboxydothermus hydrogenoformans (strain ATCC BAA-161 / DSM 6008 / Z-2901)).